Reading from the N-terminus, the 244-residue chain is Homeobox-leucine zipper protein HOX14 (244 aa).

The interval 25 to 64 (ASGEVQGERPRARRRRRRGARCVGGGGGGGEVDGGDPKKR) is disordered. Basic residues predominate over residues 35 to 44 (RARRRRRRGA). Residues 46–56 (CVGGGGGGGEV) show a composition bias toward gly residues. A DNA-binding region (homeobox) is located at residues 59–118 (GDPKKRRLSDEQVEMLELSFREERKLETGRKVHLASELGLDPKQVAVWFQNRRARHKSKL). A coiled-coil region spans residues 108 to 167 (QNRRARHKSKLLEEEFSKLKHAHDAAILHKCHLENEVLRLKERLVVAEEEVRRLRSAAGS).

Belongs to the HD-ZIP homeobox family. Class I subfamily. As to expression, expressed in roots, stems, leaf blades and panicles.

It is found in the nucleus. Its function is as follows. Probable transcription factor. The sequence is that of Homeobox-leucine zipper protein HOX14 (HOX14) from Oryza sativa subsp. indica (Rice).